The following is a 578-amino-acid chain: Zinc finger protein 248 (578 aa).

Residues 8–78 form the KRAB domain; the sequence is VSFKDVCVDF…LEKGFPSQDP (71 aa). A C2H2-type 1; degenerate zinc finger spans residues 239–263; the sequence is TVCKYNECGRTFIESLKLNISQRPH. Residue Lys340 forms a Glycyl lysine isopeptide (Lys-Gly) (interchain with G-Cter in SUMO2) linkage. 7 consecutive C2H2-type zinc fingers follow at residues 379 to 401, 407 to 429, 435 to 457, 463 to 485, 491 to 513, 519 to 542, and 547 to 569; these read FECG…QRTH, YECT…QRTH, YECK…QRTH, YECN…QRTH, FICN…QRTH, YKCN…RTHT, and YECN…QRIH.

It belongs to the krueppel C2H2-type zinc-finger protein family.

Its subcellular location is the nucleus. Functionally, may be involved in transcriptional regulation. This Pongo abelii (Sumatran orangutan) protein is Zinc finger protein 248 (ZNF248).